A 349-amino-acid polypeptide reads, in one-letter code: FK506-binding protein-like (349 aa).

At threonine 3 the chain carries Phosphothreonine. The disordered stretch occupies residues 36–55; that stretch reads RQQPRDPPTETLELEVSPDP. TPR repeat units follow at residues 210–243, 252–285, and 286–319; these read AREE…LLTL, TVLH…EPGH, and LKAL…DPKN.

In terms of assembly, forms a ternary complex with CDKN1A/p21 and HSP90AB1/Hsp90. Ubiquitously expressed with higher levels in testis.

In terms of biological role, may be involved in response to X-ray. Regulates p21 protein stability by binding to Hsp90 and p21. The protein is FK506-binding protein-like (FKBPL) of Homo sapiens (Human).